The following is a 339-amino-acid chain: 2-oxoisovalerate dehydrogenase subunit beta (339 aa).

Heterodimer of an alpha and a beta chain. The cofactor is thiamine diphosphate.

The enzyme catalyses N(6)-[(R)-lipoyl]-L-lysyl-[protein] + 3-methyl-2-oxobutanoate + H(+) = N(6)-[(R)-S(8)-2-methylpropanoyldihydrolipoyl]-L-lysyl-[protein] + CO2. The branched-chain alpha-keto dehydrogenase complex catalyzes the overall conversion of alpha-keto acids to acyl-CoA and CO(2). It contains multiple copies of three enzymatic components: branched-chain alpha-keto acid decarboxylase (E1), lipoamide acyltransferase (E2) and lipoamide dehydrogenase (E3). This is 2-oxoisovalerate dehydrogenase subunit beta (bkdA2) from Pseudomonas putida (Arthrobacter siderocapsulatus).